A 471-amino-acid polypeptide reads, in one-letter code: Isochorismate synthase MenF (471 aa).

The active-site Proton acceptor is Lys226. Residue Glu275 is the Proton donor of the active site. Mg(2+) is bound by residues Glu319 and Glu454.

It belongs to the isochorismate synthase family. The cofactor is Mg(2+).

It carries out the reaction chorismate = isochorismate. It participates in quinol/quinone metabolism; 1,4-dihydroxy-2-naphthoate biosynthesis; 1,4-dihydroxy-2-naphthoate from chorismate: step 1/7. It functions in the pathway quinol/quinone metabolism; menaquinone biosynthesis. Functionally, catalyzes the conversion of chorismate to isochorismate. The protein is Isochorismate synthase MenF of Bacillus subtilis (strain 168).